The sequence spans 137 residues: uncharacterized protein (137 aa).

The tract at residues 67–87 (KSERQHQRVHHELPHDKPRQS) is disordered. Positions 70–85 (RQHQRVHHELPHDKPR) are enriched in basic and acidic residues.

This is an uncharacterized protein from Human cytomegalovirus (strain AD169) (HHV-5).